We begin with the raw amino-acid sequence, 213 residues long: 5''-phosphoribostamycin phosphatase (213 aa).

The Tele-phosphohistidine intermediate role is filled by His8. His155 is a catalytic residue.

Belongs to the histidine phosphatase superfamily.

The enzyme catalyses 5''-phosphoribostamycin + H2O = ribostamycin + phosphate. Its pathway is antibiotic biosynthesis; butirosin biosynthesis. Functionally, catalyzes dephosphorylation of 5''-phosphoribostamycin to generate ribostamycinin the biosynthetic pathway of butirosin. This Niallia circulans (Bacillus circulans) protein is 5''-phosphoribostamycin phosphatase (btrP).